A 375-amino-acid polypeptide reads, in one-letter code: Alcohol dehydrogenase 1A (375 aa).

Residue Ser2 is modified to N-acetylserine. Phosphoserine is present on Ser23. Position 35 is a phosphotyrosine (Tyr35). Cys47 contributes to the Zn(2+) binding site. Residue 48–52 participates in NAD(+) binding; that stretch reads GTDDH. Zn(2+) is bound by residues His68, Cys98, Cys101, Cys104, Cys112, and Cys175. NAD(+) is bound by residues 200–205, Asp224, Lys229, Ile270, 293–295, 318–320, and Arg370; these read GLGGVG, VGV, and AVY.

This sequence belongs to the zinc-containing alcohol dehydrogenase family. As to quaternary structure, dimer of identical or heterodimer of closely related subunits alpha, beta, or gamma that are encoded by genes ADH1A, ADH1B, and ADH1C, respectively. The cofactor is Zn(2+).

Its subcellular location is the cytoplasm. The catalysed reaction is a primary alcohol + NAD(+) = an aldehyde + NADH + H(+). It catalyses the reaction a secondary alcohol + NAD(+) = a ketone + NADH + H(+). The enzyme catalyses butan-1-ol + NAD(+) = butanal + NADH + H(+). It carries out the reaction 1-propanol + NAD(+) = propanal + NADH + H(+). The catalysed reaction is propan-2-ol + NAD(+) = acetone + NADH + H(+). Functionally, alcohol dehydrogenase. Oxidizes primary as well as secondary alcohols. Ethanol is a very poor substrate. The sequence is that of Alcohol dehydrogenase 1A (ADH1A) from Macaca mulatta (Rhesus macaque).